The chain runs to 308 residues: Maspardin (308 aa).

The 73-residue stretch at Phe-87–Met-159 folds into the AB hydrolase-1 domain. The residue at position 304 (Ser-304) is a Phosphoserine.

This sequence belongs to the AB hydrolase superfamily. As to quaternary structure, interacts with CD4. Interacts with ALDH16A1. In terms of tissue distribution, expressed in cell lines FT.1 and in a L cell fibroblast derivative (at protein level).

It localises to the cytoplasm. May play a role as a negative regulatory factor in CD4-dependent T-cell activation. This chain is Maspardin (Spg21), found in Mus musculus (Mouse).